A 346-amino-acid polypeptide reads, in one-letter code: Centromere protein L (346 aa).

The residue at position 41 (serine 41) is a Phosphoserine. At threonine 45 the chain carries Phosphothreonine. Serine 55 carries the post-translational modification Phosphoserine.

Belongs to the CENP-L/IML3 family. Component of the CENPA-CAD complex, composed of CENPI, CENPK, CENPL, CENPO, CENPP, CENPQ, CENPR and CENPS. The CENPA-CAD complex interacts with the CENPA-NAC complex, at least composed of CENPA, CENPC, CENPH, CENPM, CENPN, CENPT and CENPU.

The protein localises to the nucleus. It localises to the chromosome. Its subcellular location is the centromere. Its function is as follows. Component of the CENPA-CAD (nucleosome distal) complex, a complex recruited to centromeres which is involved in assembly of kinetochore proteins, mitotic progression and chromosome segregation. May be involved in incorporation of newly synthesized CENPA into centromeres via its interaction with the CENPA-NAC complex. This chain is Centromere protein L (CENPL), found in Bos taurus (Bovine).